The chain runs to 250 residues: Cell division protein FtsQ (250 aa).

Residues 1–11 lie on the Cytoplasmic side of the membrane; the sequence is MWNNVRQLNLA. Residues 12–32 traverse the membrane as a helical segment; that stretch reads ASALYALLLLVLAAAGCYWLI. The Periplasmic segment spans residues 33 to 250; the sequence is QRPAFALREI…FLTDTDKGKK (218 aa). Residues 37–106 form the POTRA domain; sequence FALREIRIDG…NALAVTLEEY (70 aa).

This sequence belongs to the FtsQ/DivIB family. FtsQ subfamily. As to quaternary structure, part of a complex composed of FtsB, FtsL and FtsQ.

Its subcellular location is the cell inner membrane. Its function is as follows. Essential cell division protein. May link together the upstream cell division proteins, which are predominantly cytoplasmic, with the downstream cell division proteins, which are predominantly periplasmic. May control correct divisome assembly. The protein is Cell division protein FtsQ of Burkholderia pseudomallei (strain K96243).